An 83-amino-acid chain; its full sequence is RNA-binding protein Hfq (83 aa).

The Sm domain occupies 9–68 (DPYLNALRKERIPVSIFLVNGIKLQGQIESFDQFVILLKNTVSQMVYKHAISTVVPARNV).

The protein belongs to the Hfq family. Homohexamer.

In terms of biological role, RNA chaperone that binds small regulatory RNA (sRNAs) and mRNAs to facilitate mRNA translational regulation in response to envelope stress, environmental stress and changes in metabolite concentrations. Also binds with high specificity to tRNAs. This chain is RNA-binding protein Hfq, found in Hahella chejuensis (strain KCTC 2396).